The sequence spans 153 residues: uncharacterized protein (153 aa).

It localises to the mitochondrion. This is an uncharacterized protein from Arabidopsis thaliana (Mouse-ear cress).